The following is a 367-amino-acid chain: Flagellar P-ring protein (367 aa).

Positions 1-21 are cleaved as a signal peptide; sequence MKIIQTFFIITLLWLSQGVQA.

Belongs to the FlgI family. In terms of assembly, the basal body constitutes a major portion of the flagellar organelle and consists of four rings (L,P,S, and M) mounted on a central rod.

The protein localises to the periplasm. The protein resides in the bacterial flagellum basal body. In terms of biological role, assembles around the rod to form the L-ring and probably protects the motor/basal body from shearing forces during rotation. The chain is Flagellar P-ring protein from Nitrosococcus oceani (strain ATCC 19707 / BCRC 17464 / JCM 30415 / NCIMB 11848 / C-107).